The sequence spans 515 residues: Bifunctional purine biosynthesis protein PurH (515 aa).

The MGS-like domain maps to methionine 1–valine 145.

Belongs to the PurH family.

The catalysed reaction is (6R)-10-formyltetrahydrofolate + 5-amino-1-(5-phospho-beta-D-ribosyl)imidazole-4-carboxamide = 5-formamido-1-(5-phospho-D-ribosyl)imidazole-4-carboxamide + (6S)-5,6,7,8-tetrahydrofolate. The enzyme catalyses IMP + H2O = 5-formamido-1-(5-phospho-D-ribosyl)imidazole-4-carboxamide. The protein operates within purine metabolism; IMP biosynthesis via de novo pathway; 5-formamido-1-(5-phospho-D-ribosyl)imidazole-4-carboxamide from 5-amino-1-(5-phospho-D-ribosyl)imidazole-4-carboxamide (10-formyl THF route): step 1/1. It functions in the pathway purine metabolism; IMP biosynthesis via de novo pathway; IMP from 5-formamido-1-(5-phospho-D-ribosyl)imidazole-4-carboxamide: step 1/1. In Streptococcus pyogenes serotype M3 (strain ATCC BAA-595 / MGAS315), this protein is Bifunctional purine biosynthesis protein PurH.